Here is a 256-residue protein sequence, read N- to C-terminus: MSLKPFTYPFPETRFLHAGPNVYKFKIRYGNSIRGEEIEDKEVIVQELEDSIRAVLANMDSLQPFVTEHFIVFPYKSKWERVSHLKFKHGESILTPYPFVFTLYIEMKWFAEDLPSGKPADDIPLELVLAETEAEEATMRKWKRKLMEEPSSPSRQGPHRAKMETSSEASSNKKPLKESKRSTDEEAQQEYQDTPASNAIAVKEQDAALGHGLQGLVVPPLQHSSPPPPKEPGARGFLGFLSALFPFRYFFKKSGQ.

Residues 1 to 232 lie on the Nuclear side of the membrane; the sequence is MSLKPFTYPF…HSSPPPPKEP (232 aa). Disordered regions lie at residues 143–197 and 211–235; these read KRKL…TPAS and HGLQ…PGAR. Positions 164 to 173 are enriched in polar residues; it reads ETSSEASSNK. Over residues 175-184 the composition is skewed to basic and acidic residues; sequence PLKESKRSTD. A helical transmembrane segment spans residues 233 to 251; it reads GARGFLGFLSALFPFRYFF. The Perinuclear space portion of the chain corresponds to 252–256; that stretch reads KKSGQ.

It belongs to the MAJIN family. Component of the MAJIN-TERB1-TERB2 complex, composed of MAJIN, TERB1 and TERB2. In terms of tissue distribution, specifically expressed in germline tissues.

It localises to the nucleus inner membrane. It is found in the chromosome. Its subcellular location is the telomere. Its function is as follows. Meiosis-specific telomere-associated protein involved in meiotic telomere attachment to the nucleus inner membrane, a crucial step for homologous pairing and synapsis. Component of the MAJIN-TERB1-TERB2 complex, which promotes telomere cap exchange by mediating attachment of telomeric DNA to the inner nuclear membrane and replacement of the protective cap of telomeric chromosomes: in early meiosis, the MAJIN-TERB1-TERB2 complex associates with telomeric DNA and the shelterin/telosome complex. During prophase, the complex matures and promotes release of the shelterin/telosome complex from telomeric DNA. In the complex, MAJIN acts as the anchoring subunit to the nucleus inner membrane. MAJIN shows DNA-binding activity, possibly for the stabilization of telomere attachment on the nucleus inner membrane. The sequence is that of Membrane-anchored junction protein from Mus musculus (Mouse).